The chain runs to 443 residues: Methyl-coenzyme M reductase subunit beta (443 aa).

Y367 is a coenzyme M binding site. Coenzyme B is bound at residue G369.

It belongs to the methyl-coenzyme M reductase beta subunit family. In terms of assembly, MCR is a hexamer of two alpha, two beta, and two gamma chains, forming a dimer of heterotrimers. The cofactor is coenzyme F430.

The protein resides in the cytoplasm. The enzyme catalyses coenzyme B + methyl-coenzyme M = methane + coenzyme M-coenzyme B heterodisulfide. It participates in one-carbon metabolism; methyl-coenzyme M reduction; methane from methyl-coenzyme M: step 1/1. Functionally, component of the methyl-coenzyme M reductase (MCR) I that catalyzes the reductive cleavage of methyl-coenzyme M (CoM-S-CH3 or 2-(methylthio)ethanesulfonate) using coenzyme B (CoB or 7-mercaptoheptanoylthreonine phosphate) as reductant which results in the production of methane and the mixed heterodisulfide of CoB and CoM (CoM-S-S-CoB). This is the final step in methanogenesis. The protein is Methyl-coenzyme M reductase subunit beta (mcrB) of Methanococcus voltae.